The primary structure comprises 251 residues: Flap endonuclease Xni (251 aa).

Asp-104 serves as a coordination point for Mg(2+). The 5'-3' exonuclease domain occupies 160–249; sequence VLPRQLPDYW…IDGNLQQLRL (90 aa). 5 residues coordinate K(+): Leu-171, Ala-172, Pro-180, Val-182, and Ile-185. The tract at residues 184-189 is interaction with DNA; that stretch reads GIGPKS.

It belongs to the Xni family. Requires Mg(2+) as cofactor. K(+) serves as cofactor.

Functionally, has flap endonuclease activity. During DNA replication, flap endonucleases cleave the 5'-overhanging flap structure that is generated by displacement synthesis when DNA polymerase encounters the 5'-end of a downstream Okazaki fragment. This chain is Flap endonuclease Xni, found in Salmonella typhimurium (strain LT2 / SGSC1412 / ATCC 700720).